Reading from the N-terminus, the 316-residue chain is Ecto-ADP-ribosyltransferase 5 (316 aa).

Positions 1–23 are cleaved as a signal peptide; the sequence is MIQATLLISLSCLSFYTLGSGVR. Cys-50 and Cys-266 are disulfide-bonded. A glycan (N-linked (GlcNAc...) asparagine) is linked at Asn-68. Residues 70–261 form the TR mART core domain; sequence TRLRESWETA…MTLSSSDQMC (192 aa). Residue Tyr-107 coordinates NAD(+). An N-linked (GlcNAc...) asparagine glycan is attached at Asn-109. 2 residues coordinate NAD(+): Arg-168 and Gln-188. Residue Arg-168 is part of the active site. Residue Ser-191 is part of the active site. Residue Ser-222 participates in NAD(+) binding. Residue Glu-229 is part of the active site. Residues Asn-242 and Asn-248 are each glycosylated (N-linked (GlcNAc...) asparagine).

This sequence belongs to the Arg-specific ADP-ribosyltransferase family.

The protein resides in the secreted. It localises to the membrane. The catalysed reaction is L-arginyl-[protein] + NAD(+) = N(omega)-(ADP-D-ribosyl)-L-arginyl-[protein] + nicotinamide + H(+). The chain is Ecto-ADP-ribosyltransferase 5 (ART5) from Bos taurus (Bovine).